Here is a 175-residue protein sequence, read N- to C-terminus: Glutamyl-tRNA(Gln) amidotransferase subunit F, mitochondrial (175 aa).

The N-terminal 19 residues, Met-1 to Tyr-19, are a transit peptide targeting the mitochondrion.

Belongs to the GatF family. As to quaternary structure, subunit of the heterotrimeric GatFAB amidotransferase (AdT) complex, composed of A, B and F subunits.

It localises to the mitochondrion inner membrane. It catalyses the reaction L-glutamyl-tRNA(Gln) + L-glutamine + ATP + H2O = L-glutaminyl-tRNA(Gln) + L-glutamate + ADP + phosphate + H(+). Functionally, allows the formation of correctly charged Gln-tRNA(Gln) through the transamidation of misacylated Glu-tRNA(Gln) in the mitochondria. The reaction takes place in the presence of glutamine and ATP through an activated gamma-phospho-Glu-tRNA(Gln). Required for proper protein synthesis within the mitochondrion. The chain is Glutamyl-tRNA(Gln) amidotransferase subunit F, mitochondrial from Lachancea thermotolerans (strain ATCC 56472 / CBS 6340 / NRRL Y-8284) (Yeast).